A 154-amino-acid polypeptide reads, in one-letter code: Protein FAM162A (154 aa).

The tract at residues 76–102 is required for proapoptotic activity; it reads RFKKEDEIPETVSLEMLDAAKNKMRVK. Residues 103–120 traverse the membrane as a helical segment; it reads ISYLMIALTVVGCIFMVI.

Belongs to the UPF0389 family. In terms of assembly, interacts with HSP90AB1; HSP90AB1 is essential for FAM162A mitochondrial localization and pro-apoptotic activity. Interacts with VDAC2; the interaction is probably involved in inducing mitochondrial permeability transition.

It localises to the mitochondrion membrane. Its function is as follows. Proposed to be involved in regulation of apoptosis; the exact mechanism may differ between cell types/tissues. May be involved in hypoxia-induced cell death of transformed cells implicating cytochrome C release and caspase activation (such as CASP9) and inducing mitochondrial permeability transition. May be involved in hypoxia-induced cell death of neuronal cells probably by promoting release of AIFM1 from mitochondria to cytoplasm and its translocation to the nucleus; however, the involvement of caspases has been reported conflictingly. This is Protein FAM162A (FAM162A) from Homo sapiens (Human).